A 227-amino-acid chain; its full sequence is Cytochrome c oxidase subunit 2 (227 aa).

Residues methionine 1–serine 14 lie on the Mitochondrial intermembrane side of the membrane. The chain crosses the membrane as a helical span at residues proline 15–methionine 45. At leucine 46 to glutamine 59 the chain is on the mitochondrial matrix side. Residues glutamate 60–methionine 87 form a helical membrane-spanning segment. Over aspartate 88–valine 227 the chain is Mitochondrial intermembrane. Histidine 161, cysteine 196, glutamate 198, cysteine 200, histidine 204, and methionine 207 together coordinate Cu cation. Glutamate 198 contacts Mg(2+). Tyrosine 218 is subject to Phosphotyrosine.

Belongs to the cytochrome c oxidase subunit 2 family. Component of the cytochrome c oxidase (complex IV, CIV), a multisubunit enzyme composed of 14 subunits. The complex is composed of a catalytic core of 3 subunits MT-CO1, MT-CO2 and MT-CO3, encoded in the mitochondrial DNA, and 11 supernumerary subunits COX4I, COX5A, COX5B, COX6A, COX6B, COX6C, COX7A, COX7B, COX7C, COX8 and NDUFA4, which are encoded in the nuclear genome. The complex exists as a monomer or a dimer and forms supercomplexes (SCs) in the inner mitochondrial membrane with NADH-ubiquinone oxidoreductase (complex I, CI) and ubiquinol-cytochrome c oxidoreductase (cytochrome b-c1 complex, complex III, CIII), resulting in different assemblies (supercomplex SCI(1)III(2)IV(1) and megacomplex MCI(2)III(2)IV(2)). Found in a complex with TMEM177, COA6, COX18, COX20, SCO1 and SCO2. Interacts with TMEM177 in a COX20-dependent manner. Interacts with COX20. Interacts with COX16. The cofactor is Cu cation.

The protein resides in the mitochondrion inner membrane. It catalyses the reaction 4 Fe(II)-[cytochrome c] + O2 + 8 H(+)(in) = 4 Fe(III)-[cytochrome c] + 2 H2O + 4 H(+)(out). Functionally, component of the cytochrome c oxidase, the last enzyme in the mitochondrial electron transport chain which drives oxidative phosphorylation. The respiratory chain contains 3 multisubunit complexes succinate dehydrogenase (complex II, CII), ubiquinol-cytochrome c oxidoreductase (cytochrome b-c1 complex, complex III, CIII) and cytochrome c oxidase (complex IV, CIV), that cooperate to transfer electrons derived from NADH and succinate to molecular oxygen, creating an electrochemical gradient over the inner membrane that drives transmembrane transport and the ATP synthase. Cytochrome c oxidase is the component of the respiratory chain that catalyzes the reduction of oxygen to water. Electrons originating from reduced cytochrome c in the intermembrane space (IMS) are transferred via the dinuclear copper A center (CU(A)) of subunit 2 and heme A of subunit 1 to the active site in subunit 1, a binuclear center (BNC) formed by heme A3 and copper B (CU(B)). The BNC reduces molecular oxygen to 2 water molecules using 4 electrons from cytochrome c in the IMS and 4 protons from the mitochondrial matrix. The chain is Cytochrome c oxidase subunit 2 (MT-CO2) from Vulpes macrotis (Kit fox).